Consider the following 303-residue polypeptide: ATP-dependent (S)-NAD(P)H-hydrate dehydratase (303 aa).

The region spanning 12–299 (QQQLVCSVIP…AEVRTAFSML (288 aa)) is the YjeF C-terminal domain. Residues G106 and 158–164 (NAVELDR) contribute to the (6S)-NADPHX site. ATP-binding positions include 194–198 (KGSED) and 213–222 (GSPRRCGGQG). D223 is a (6S)-NADPHX binding site.

This sequence belongs to the NnrD/CARKD family. Mg(2+) serves as cofactor.

The catalysed reaction is (6S)-NADHX + ATP = ADP + phosphate + NADH + H(+). It catalyses the reaction (6S)-NADPHX + ATP = ADP + phosphate + NADPH + H(+). Functionally, catalyzes the dehydration of the S-form of NAD(P)HX at the expense of ATP, which is converted to ADP. Together with NAD(P)HX epimerase, which catalyzes the epimerization of the S- and R-forms, the enzyme allows the repair of both epimers of NAD(P)HX, a damaged form of NAD(P)H that is a result of enzymatic or heat-dependent hydration. The sequence is that of ATP-dependent (S)-NAD(P)H-hydrate dehydratase from Ixodes scapularis (Black-legged tick).